A 509-amino-acid chain; its full sequence is Heat shock 70 kDa protein 14 (509 aa).

The protein belongs to the heat shock protein 70 family. Component of ribosome-associated complex (RAC), a heterodimer composed of Hsp70/DnaK-type chaperone HSPA14 and Hsp40/DnaJ-type chaperone DNAJC2.

The protein localises to the cytoplasm. Its subcellular location is the cytosol. Its function is as follows. Component of the ribosome-associated complex (RAC), a complex involved in folding or maintaining nascent polypeptides in a folding-competent state. In the RAC complex, binds to the nascent polypeptide chain, while DNAJC2 stimulates its ATPase activity. This chain is Heat shock 70 kDa protein 14 (HSPA14), found in Homo sapiens (Human).